A 433-amino-acid polypeptide reads, in one-letter code: Pyrimidine-nucleoside phosphorylase (433 aa).

81–83 contacts phosphate; it reads KHS. Positions 88 and 90 each coordinate K(+). Phosphate-binding positions include threonine 92, 108-110, and threonine 120; that span reads KMS. Residues arginine 168 and lysine 187 each contribute to the substrate site. Residues leucine 243, alanine 246, and glutamate 255 each coordinate K(+).

It belongs to the thymidine/pyrimidine-nucleoside phosphorylase family. Homodimer. K(+) serves as cofactor.

It catalyses the reaction uridine + phosphate = alpha-D-ribose 1-phosphate + uracil. It carries out the reaction thymidine + phosphate = 2-deoxy-alpha-D-ribose 1-phosphate + thymine. The catalysed reaction is 2'-deoxyuridine + phosphate = 2-deoxy-alpha-D-ribose 1-phosphate + uracil. Functionally, catalyzes phosphorolysis of the pyrimidine nucleosides uridine, thymidine and 2'-deoxyuridine with the formation of the corresponding pyrimidine base and ribose-1-phosphate. This chain is Pyrimidine-nucleoside phosphorylase (pdp), found in Staphylococcus epidermidis (strain ATCC 35984 / DSM 28319 / BCRC 17069 / CCUG 31568 / BM 3577 / RP62A).